The primary structure comprises 346 residues: Uroporphyrinogen decarboxylase (346 aa).

Substrate-binding positions include 21–25, Asp71, Tyr146, Ser201, and His316; that span reads RQAGR.

Belongs to the uroporphyrinogen decarboxylase family. In terms of assembly, homodimer.

Its subcellular location is the cytoplasm. It catalyses the reaction uroporphyrinogen III + 4 H(+) = coproporphyrinogen III + 4 CO2. The protein operates within porphyrin-containing compound metabolism; protoporphyrin-IX biosynthesis; coproporphyrinogen-III from 5-aminolevulinate: step 4/4. Functionally, catalyzes the decarboxylation of four acetate groups of uroporphyrinogen-III to yield coproporphyrinogen-III. This chain is Uroporphyrinogen decarboxylase, found in Rickettsia massiliae (strain Mtu5).